Here is a 302-residue protein sequence, read N- to C-terminus: tRNA pseudouridine synthase B (302 aa).

Substrate is bound at residue His-40. Asp-45 functions as the Nucleophile in the catalytic mechanism. Positions 73, 178, and 199 each coordinate substrate.

Belongs to the pseudouridine synthase TruB family. Type 1 subfamily.

It carries out the reaction uridine(55) in tRNA = pseudouridine(55) in tRNA. Its function is as follows. Responsible for synthesis of pseudouridine from uracil-55 in the psi GC loop of transfer RNAs. This chain is tRNA pseudouridine synthase B, found in Buchnera aphidicola subsp. Baizongia pistaciae (strain Bp).